The primary structure comprises 278 residues: 2-succinyl-6-hydroxy-2,4-cyclohexadiene-1-carboxylate synthase (278 aa).

This sequence belongs to the AB hydrolase superfamily. MenH family. Monomer.

The enzyme catalyses 5-enolpyruvoyl-6-hydroxy-2-succinyl-cyclohex-3-ene-1-carboxylate = (1R,6R)-6-hydroxy-2-succinyl-cyclohexa-2,4-diene-1-carboxylate + pyruvate. Its pathway is quinol/quinone metabolism; 1,4-dihydroxy-2-naphthoate biosynthesis; 1,4-dihydroxy-2-naphthoate from chorismate: step 3/7. It participates in quinol/quinone metabolism; menaquinone biosynthesis. In terms of biological role, catalyzes a proton abstraction reaction that results in 2,5-elimination of pyruvate from 2-succinyl-5-enolpyruvyl-6-hydroxy-3-cyclohexene-1-carboxylate (SEPHCHC) and the formation of 2-succinyl-6-hydroxy-2,4-cyclohexadiene-1-carboxylate (SHCHC). The chain is 2-succinyl-6-hydroxy-2,4-cyclohexadiene-1-carboxylate synthase from Photorhabdus laumondii subsp. laumondii (strain DSM 15139 / CIP 105565 / TT01) (Photorhabdus luminescens subsp. laumondii).